We begin with the raw amino-acid sequence, 717 residues long: Scinderin (717 aa).

Residues 1–363 (MAPERHPPAF…DGFGKVYVTE (363 aa)) form an actin-severing region. The Gelsolin-like 1 repeat unit spans residues 28–108 (ELVPVPPSRH…IQGYESNEFV (81 aa)). Residues 112 to 119 (KGGIKYKA) and 138 to 146 (RLLHIKGRR) each bind a 1,2-diacyl-sn-glycero-3-phospho-(1D-myo-inositol-4,5-bisphosphate). Gelsolin-like repeat units follow at residues 148-220 (VRAT…PDEL), 265-340 (VVAE…TPIF), 408-483 (RVPV…PHLL), 526-590 (AEVD…EEFW), and 628-703 (IEEV…PPTF). A ca(2+)-dependent actin binding region spans residues 364 to 715 (RVAKIEQIEF…WFLAWDSNKW (352 aa)). Ca(2+) is bound by residues asparagine 538, aspartate 539, glutamate 562, aspartate 643, aspartate 644, and glutamate 666.

Belongs to the villin/gelsolin family.

Its subcellular location is the cytoplasm. The protein resides in the cytoskeleton. It localises to the cell projection. The protein localises to the podosome. Ca(2+)-dependent actin filament-severing protein that has a regulatory function in exocytosis by affecting the organization of the microfilament network underneath the plasma membrane. In vitro, also has barbed end capping and nucleating activities in the presence of Ca(2+). Severing activity is inhibited by phosphatidylinositol 4,5-bis-phosphate (PIP2). Required for megakaryocyte differentiation, maturation, polyploidization and apoptosis with the release of platelet-like particles. Plays a role in osteoclastogenesis (OCG) and actin cytoskeletal organization in osteoclasts. Regulates chondrocyte proliferation and differentiation. Inhibits cell proliferation and tumorigenesis. Signaling is mediated by MAPK, p38 and JNK pathways. In Gallus gallus (Chicken), this protein is Scinderin (SCIN).